The chain runs to 199 residues: 7-methyl-GTP pyrophosphatase (199 aa).

Residue Asp-76 is the Proton acceptor of the active site.

It belongs to the Maf family. YceF subfamily. Requires a divalent metal cation as cofactor.

The protein resides in the cytoplasm. The catalysed reaction is N(7)-methyl-GTP + H2O = N(7)-methyl-GMP + diphosphate + H(+). Functionally, nucleoside triphosphate pyrophosphatase that hydrolyzes 7-methyl-GTP (m(7)GTP). May have a dual role in cell division arrest and in preventing the incorporation of modified nucleotides into cellular nucleic acids. This is 7-methyl-GTP pyrophosphatase from Brucella abortus biovar 1 (strain 9-941).